The following is a 360-amino-acid chain: Dual-specificity RNA methyltransferase RlmN (360 aa).

Glu-89 (proton acceptor) is an active-site residue. The Radical SAM core domain occupies 95 to 330 (DSGRGTLCVS…TRVTRGQDID (236 aa)). Cys-102 and Cys-333 are oxidised to a cystine. [4Fe-4S] cluster contacts are provided by Cys-109, Cys-113, and Cys-116. S-adenosyl-L-methionine contacts are provided by residues 159–160 (GE), Ser-191, 213–215 (SLH), and Asn-290. The active-site S-methylcysteine intermediate is Cys-333.

Belongs to the radical SAM superfamily. RlmN family. [4Fe-4S] cluster serves as cofactor.

It localises to the cytoplasm. It catalyses the reaction adenosine(2503) in 23S rRNA + 2 reduced [2Fe-2S]-[ferredoxin] + 2 S-adenosyl-L-methionine = 2-methyladenosine(2503) in 23S rRNA + 5'-deoxyadenosine + L-methionine + 2 oxidized [2Fe-2S]-[ferredoxin] + S-adenosyl-L-homocysteine. The catalysed reaction is adenosine(37) in tRNA + 2 reduced [2Fe-2S]-[ferredoxin] + 2 S-adenosyl-L-methionine = 2-methyladenosine(37) in tRNA + 5'-deoxyadenosine + L-methionine + 2 oxidized [2Fe-2S]-[ferredoxin] + S-adenosyl-L-homocysteine. In terms of biological role, specifically methylates position 2 of adenine 2503 in 23S rRNA and position 2 of adenine 37 in tRNAs. m2A2503 modification seems to play a crucial role in the proofreading step occurring at the peptidyl transferase center and thus would serve to optimize ribosomal fidelity. In Alkalilimnicola ehrlichii (strain ATCC BAA-1101 / DSM 17681 / MLHE-1), this protein is Dual-specificity RNA methyltransferase RlmN.